We begin with the raw amino-acid sequence, 284 residues long: Orotidine 5'-phosphate decarboxylase (284 aa).

Substrate is bound by residues Asp-42, 64–66, 96–105, Tyr-237, and Arg-255; these read KTH and DRKFADIGNT. The active-site Proton donor is the Lys-98.

The protein belongs to the OMP decarboxylase family.

The enzyme catalyses orotidine 5'-phosphate + H(+) = UMP + CO2. It participates in pyrimidine metabolism; UMP biosynthesis via de novo pathway; UMP from orotate: step 2/2. This Magnusiomyces magnusii (Yeast) protein is Orotidine 5'-phosphate decarboxylase (URA3).